We begin with the raw amino-acid sequence, 616 residues long: Carboxylic acid transporter protein homolog (616 aa).

Over residues 1 to 11 the composition is skewed to basic and acidic residues; that stretch reads MSSSITDEKIS. The segment at 1–65 is disordered; it reads MSSSITDEKI…LYHNPSLPAQ (65 aa). Residue Ser-2 is modified to N-acetylserine. The Cytoplasmic segment spans residues 2–140; the sequence is SSSITDEKIS…LRKMTWQNWN (139 aa). The residue at position 4 (Ser-4) is a Phosphoserine. A Glycyl lysine isopeptide (Lys-Gly) (interchain with G-Cter in ubiquitin) cross-link involves residue Lys-9. A phosphoserine mark is found at Ser-11, Ser-61, and Ser-66. Thr-70 is modified (phosphothreonine). The chain crosses the membrane as a helical span at residues 141–161; that stretch reads YFFMGYFAWLSAAWAFFCVSV. Over 162-176 the chain is Extracellular; it reads SVAPLAELYDRPTKD. A helical membrane pass occupies residues 177 to 197; that stretch reads ITWGLGLVLFVRSAGAVIFGL. Residues 198–205 are Cytoplasmic-facing; the sequence is WTDKSSRK. The chain crosses the membrane as a helical span at residues 206-226; sequence WPYITCLFLFVIAQLCTPWCD. Topologically, residues 227–230 are extracellular; sequence TYEK. The helical transmembrane segment at 231-251 threads the bilayer; sequence FLGVRWITGIAMGGIYGCASA. At 252–263 the chain is on the cytoplasmic side; it reads TAIEDAPVKARS. The chain crosses the membrane as a helical span at residues 264-284; the sequence is FLSGLFFSAYAMGFIFAIIFY. At 285–296 the chain is on the extracellular side; the sequence is RAFGYFRDDGWK. A helical transmembrane segment spans residues 297–317; the sequence is ILFWFSIFLPILLIFWRLLWP. Over 318–363 the chain is Cytoplasmic; that stretch reads ETKYFTKVLKARKLILSDAVKANGGEPLPKANFKQKMVSMKRTVQK. Residue Lys-338 forms a Glycyl lysine isopeptide (Lys-Gly) (interchain with G-Cter in ubiquitin) linkage. A helical membrane pass occupies residues 364–384; the sequence is YWLLFAYLVVLLVGPNYLTHA. Topologically, residues 385–402 are extracellular; sequence SQDLLPTMLRAQLGLSKD. A helical transmembrane segment spans residues 403–423; it reads AVTVIVVVTNIGAICGGMIFG. Topologically, residues 424–432 are cytoplasmic; sequence QFMEVTGRR. A helical transmembrane segment spans residues 433–453; that stretch reads LGLLIACTMGGCFTYPAFMLR. At 454–457 the chain is on the extracellular side; sequence SEKA. Residues 458–478 form a helical membrane-spanning segment; that stretch reads ILGAGFMLYFCVFGVWGILPI. Residues 479-489 are Cytoplasmic-facing; it reads HLAELAPADAR. A helical membrane pass occupies residues 490 to 510; that stretch reads ALVAGLSYQLGNLASAAASTI. Residues 511-535 lie on the Extracellular side of the membrane; it reads ETQLADRYPLERDASGAVIKEDYAK. A helical membrane pass occupies residues 536–556; it reads VMAILTGSVFIFTFACVFVGH. Residues 557–616 are Cytoplasmic-facing; the sequence is EKFHRDLSSPVMKKYINQVEEYEADGLSISDIVEQKTECASVKMIDSNVSKTYEEHIETV. Phosphoserine occurs at positions 584, 603, and 606.

This sequence belongs to the major facilitator superfamily. Sugar transporter (TC 2.A.1.1) family.

The protein resides in the membrane. Its function is as follows. Essential to lactate transport. The chain is Carboxylic acid transporter protein homolog (JEN1) from Saccharomyces cerevisiae (strain ATCC 204508 / S288c) (Baker's yeast).